We begin with the raw amino-acid sequence, 1342 residues long: DNA-directed RNA polymerase subunit beta (1342 aa).

Belongs to the RNA polymerase beta chain family. As to quaternary structure, the RNAP catalytic core consists of 2 alpha, 1 beta, 1 beta' and 1 omega subunit. When a sigma factor is associated with the core the holoenzyme is formed, which can initiate transcription.

It carries out the reaction RNA(n) + a ribonucleoside 5'-triphosphate = RNA(n+1) + diphosphate. DNA-dependent RNA polymerase catalyzes the transcription of DNA into RNA using the four ribonucleoside triphosphates as substrates. This is DNA-directed RNA polymerase subunit beta from Wigglesworthia glossinidia brevipalpis.